We begin with the raw amino-acid sequence, 320 residues long: Phosphate acyltransferase (320 aa).

This sequence belongs to the PlsX family. In terms of assembly, homodimer. Probably interacts with PlsY.

It localises to the cytoplasm. The catalysed reaction is a fatty acyl-[ACP] + phosphate = an acyl phosphate + holo-[ACP]. The protein operates within lipid metabolism; phospholipid metabolism. In terms of biological role, catalyzes the reversible formation of acyl-phosphate (acyl-PO(4)) from acyl-[acyl-carrier-protein] (acyl-ACP). This enzyme utilizes acyl-ACP as fatty acyl donor, but not acyl-CoA. The protein is Phosphate acyltransferase of Syntrophomonas wolfei subsp. wolfei (strain DSM 2245B / Goettingen).